The sequence spans 151 residues: Inactive oocyte-specific homeobox protein 2 (151 aa).

Residues 1–97 are disordered; the sequence is MAEGPSLHPK…PMASRKFRKE (97 aa). Positions 37–54 are enriched in polar residues; it reads MRQSPLVTPGSTTKSSLS.

Belongs to the paired homeobox family. Obox subfamily. In terms of tissue distribution, specifically expressed in oocytes and early embryos.

Functionally, in contrast to other Obox family proteins, displays a truncated homeobox domain and does not bind DNA. This is Inactive oocyte-specific homeobox protein 2 from Mus musculus (Mouse).